Consider the following 493-residue polypeptide: Cardiolipin synthase 1 (493 aa).

Helical transmembrane passes span 13–33 and 45–65; these read FTII…IIIF and WAWL…YLFF. 2 consecutive PLD phosphodiesterase domains span residues 228–255 and 406–433; these read MNNR…GDEY and ENGF…DFRS. Residues His-233, Lys-235, Asp-240, His-411, Lys-413, and Asp-418 contribute to the active site.

The protein belongs to the phospholipase D family. Cardiolipin synthase subfamily.

Its subcellular location is the cell membrane. It carries out the reaction 2 a 1,2-diacyl-sn-glycero-3-phospho-(1'-sn-glycerol) = a cardiolipin + glycerol. In terms of biological role, catalyzes the reversible phosphatidyl group transfer from one phosphatidylglycerol molecule to another to form cardiolipin (CL) (diphosphatidylglycerol) and glycerol. In Staphylococcus aureus (strain MRSA252), this protein is Cardiolipin synthase 1 (cls1).